The following is a 282-amino-acid chain: ATP synthase gamma chain (282 aa).

The protein belongs to the ATPase gamma chain family. F-type ATPases have 2 components, CF(1) - the catalytic core - and CF(0) - the membrane proton channel. CF(1) has five subunits: alpha(3), beta(3), gamma(1), delta(1), epsilon(1). CF(0) has three main subunits: a, b and c.

Its subcellular location is the cell membrane. In terms of biological role, produces ATP from ADP in the presence of a proton gradient across the membrane. The gamma chain is believed to be important in regulating ATPase activity and the flow of protons through the CF(0) complex. The protein is ATP synthase gamma chain of Clostridium botulinum (strain Kyoto / Type A2).